Here is a 205-residue protein sequence, read N- to C-terminus: Ypt/Rab-type GTPase avaA (205 aa).

Residues 17 to 23 (SGVGKTS), 33 to 40 (FSGSYKAT), G66, 125 to 128 (NKID), and 157 to 159 (SAK) contribute to the GTP site. The Effector region signature appears at 37 to 45 (YKATIGADF). Residues C203 and C205 are each lipidated (S-geranylgeranyl cysteine). C205 carries the post-translational modification Cysteine methyl ester.

The protein belongs to the small GTPase superfamily. Rab family.

Rab activation is generally mediated by a guanine exchange factor (GEF), while inactivation through hydrolysis of bound GTP is catalyzed by a GTPase activating protein (GAP). Ypt/Rab-type GTPases are key regulators of membrane trafficking and intracellular vesicular transport. They act as molecular switches that convert between GTP-bound and GDP-bound states, and regulate virtually all steps of membrane traffic from the formation of the transport vesicle at the donor membrane to its fusion at the target membrane. In the GDP-bound state, Ypt proteins are predominantly cytosolic, solubilized through the interaction with a GDP dissociation inhibitor (GDI). In the GTP-bound state, the proteins are membrane bound and interact with specific effector proteins that select cargo, promote vesicle movement, or verify the correct site of fusion. AvaA functions in vacuolar biogenesis. The polypeptide is Ypt/Rab-type GTPase avaA (Emericella nidulans (strain FGSC A4 / ATCC 38163 / CBS 112.46 / NRRL 194 / M139) (Aspergillus nidulans)).